Here is a 67-residue protein sequence, read N- to C-terminus: Large ribosomal subunit protein bL35 (67 aa).

Belongs to the bacterial ribosomal protein bL35 family.

This Sphingopyxis alaskensis (strain DSM 13593 / LMG 18877 / RB2256) (Sphingomonas alaskensis) protein is Large ribosomal subunit protein bL35.